A 43-amino-acid polypeptide reads, in one-letter code: Photosystem II reaction center protein K (43 aa).

Positions 1-6 (MSLLLA) are excised as a propeptide. A helical membrane pass occupies residues 18–38 (IVDVLPIIPVLFLLLAFVWQA).

This sequence belongs to the PsbK family. As to quaternary structure, PSII is composed of 1 copy each of membrane proteins PsbA, PsbB, PsbC, PsbD, PsbE, PsbF, PsbH, PsbI, PsbJ, PsbK, PsbL, PsbM, PsbT, PsbX, PsbY, PsbZ, Psb30/Ycf12, at least 3 peripheral proteins of the oxygen-evolving complex and a large number of cofactors. It forms dimeric complexes.

The protein resides in the plastid. Its subcellular location is the chloroplast thylakoid membrane. Functionally, one of the components of the core complex of photosystem II (PSII). PSII is a light-driven water:plastoquinone oxidoreductase that uses light energy to abstract electrons from H(2)O, generating O(2) and a proton gradient subsequently used for ATP formation. It consists of a core antenna complex that captures photons, and an electron transfer chain that converts photonic excitation into a charge separation. This is Photosystem II reaction center protein K from Oltmannsiellopsis viridis (Marine flagellate).